Reading from the N-terminus, the 640-residue chain is ATP-dependent rRNA helicase spb4 (640 aa).

The Q motif signature appears at 14 to 42 (WDAVTPALSEWVLEAMSSMGFTRMTPVQA). The Helicase ATP-binding domain maps to 45–249 (IPLFMAHKDV…RVGLRNPVKV (205 aa)). 58–65 (AVTGSGKT) contributes to the ATP binding site. Residues 197–200 (DEAD) carry the DEAD box motif. Residues 283 to 437 (ALKRIVSSVQ…SISFSDADAA (155 aa)) enclose the Helicase C-terminal domain. Residues 521-629 (AYKDKQREKR…VAKAAGAKAD (109 aa)) adopt a coiled-coil conformation. 2 disordered regions span residues 531–593 (RKEL…EEEK) and 607–640 (RKKN…QGFD). A compositionally biased stretch (basic and acidic residues) spans 577 to 593 (KSKQEKARWEKMTEEEK). Over residues 630-640 (GDDEEEFQGFD) the composition is skewed to acidic residues.

This sequence belongs to the DEAD box helicase family. DDX55/SPB4 subfamily. As to quaternary structure, component of pre-60S ribosomal complexes.

The protein resides in the nucleus. It localises to the nucleolus. It carries out the reaction ATP + H2O = ADP + phosphate + H(+). ATP-binding RNA helicase involved in the biogenesis of 60S ribosomal subunits. Binds 90S pre-ribosomal particles and dissociates from pre-60S ribosomal particles after processing of 27SB pre-rRNA. Required for the normal formation of 18S rRNA through the processing of pre-rRNAs at sites A0, A1 and A2, and the normal formation of 25S and 5.8S rRNAs through the processing of pre-rRNAs at sites C1 and C2. This chain is ATP-dependent rRNA helicase spb4, found in Aspergillus fumigatus (strain ATCC MYA-4609 / CBS 101355 / FGSC A1100 / Af293) (Neosartorya fumigata).